The following is a 207-amino-acid chain: Urease accessory protein UreG (207 aa).

Gly16–Thr23 is a GTP binding site.

It belongs to the SIMIBI class G3E GTPase family. UreG subfamily. Homodimer. UreD, UreF and UreG form a complex that acts as a GTP-hydrolysis-dependent molecular chaperone, activating the urease apoprotein by helping to assemble the nickel containing metallocenter of UreC. The UreE protein probably delivers the nickel.

The protein localises to the cytoplasm. Functionally, facilitates the functional incorporation of the urease nickel metallocenter. This process requires GTP hydrolysis, probably effectuated by UreG. The protein is Urease accessory protein UreG of Shewanella halifaxensis (strain HAW-EB4).